We begin with the raw amino-acid sequence, 332 residues long: Ubiquinol oxidase 1a, mitochondrial (332 aa).

Residues M1–M54 constitute a mitochondrion transit peptide. A helical membrane pass occupies residues A157–L177. Positions 161, 200, and 203 each coordinate Fe cation. A helical transmembrane segment spans residues A219 to S239. 3 residues coordinate Fe cation: E251, E302, and H305.

Belongs to the alternative oxidase family. As to quaternary structure, homodimer; disulfide-linked. Fe cation serves as cofactor. As to expression, expressed in roots, leaf sheaths and leaf blades.

The protein localises to the mitochondrion inner membrane. The enzyme catalyses 2 a ubiquinol + O2 = 2 a ubiquinone + 2 H2O. Its function is as follows. Catalyzes the cyanide-resistant oxidation of ubiquinol and the reduction of molecular oxygen to water, but does not translocate protons and consequently is not linked to oxidative phosphorylation. May increase respiration when the cytochrome respiratory pathway is restricted, or in response to low temperatures. In Oryza sativa subsp. japonica (Rice), this protein is Ubiquinol oxidase 1a, mitochondrial.